A 328-amino-acid chain; its full sequence is Lipoyl synthase (328 aa).

Residues Cys-57, Cys-62, Cys-68, Cys-83, Cys-87, Cys-90, and Ser-298 each coordinate [4Fe-4S] cluster. A Radical SAM core domain is found at 69 to 287; that stretch reads WSRGTATFML…REEGLSLGFL (219 aa).

The protein belongs to the radical SAM superfamily. Lipoyl synthase family. The cofactor is [4Fe-4S] cluster.

The protein localises to the cytoplasm. The catalysed reaction is [[Fe-S] cluster scaffold protein carrying a second [4Fe-4S](2+) cluster] + N(6)-octanoyl-L-lysyl-[protein] + 2 oxidized [2Fe-2S]-[ferredoxin] + 2 S-adenosyl-L-methionine + 4 H(+) = [[Fe-S] cluster scaffold protein] + N(6)-[(R)-dihydrolipoyl]-L-lysyl-[protein] + 4 Fe(3+) + 2 hydrogen sulfide + 2 5'-deoxyadenosine + 2 L-methionine + 2 reduced [2Fe-2S]-[ferredoxin]. It participates in protein modification; protein lipoylation via endogenous pathway; protein N(6)-(lipoyl)lysine from octanoyl-[acyl-carrier-protein]: step 2/2. Catalyzes the radical-mediated insertion of two sulfur atoms into the C-6 and C-8 positions of the octanoyl moiety bound to the lipoyl domains of lipoate-dependent enzymes, thereby converting the octanoylated domains into lipoylated derivatives. This is Lipoyl synthase from Deinococcus geothermalis (strain DSM 11300 / CIP 105573 / AG-3a).